Here is a 475-residue protein sequence, read N- to C-terminus: MSPEVTCPRRGHLPRFHPRTWVEPVVASSQVAASLYDAGLLLVVKASYGTGGSSNHSASPSPRGALEDQQQRAISNFYIIYNLVVGLSPLLSAYGLGWLSDRYHRKISICMSLLGFLLSRLGLLLKVLLDWPVEVLYGAAALNGLFGGFSAFWSGVMALGSLGSSEGRRSVRLILIDLMLGLAGFCGSMASGHLFKQMAGHSGQGLILTACSVSCASFALLYSLLVLKVPESVAKPSQELPAVDTVSGTVGTYRTLDPDQLDQQYAVGHPPSPGKAKPHKTTIALLFVGAIIYDLAVVGTVDVIPLFVLREPLGWNQVQVGYGMAAGYTIFITSFLGVLVFSRCFRDTTMIMIGMVSFGSGALLLAFVKETYMFYIARAVMLFALIPVTTIRSAMSKLIKGSSYGKVFVILQLSLALTGVVTSTLYNKIYQLTMDMFVGSCFALSSFLSFLAIIPISIVAYKQVPLSPYGDIIEK.

Topologically, residues 1–23 (MSPEVTCPRRGHLPRFHPRTWVE) are cytoplasmic. A helical transmembrane segment spans residues 24–44 (PVVASSQVAASLYDAGLLLVV). Topologically, residues 45 to 78 (KASYGTGGSSNHSASPSPRGALEDQQQRAISNFY) are extracellular. N-linked (GlcNAc...) asparagine glycosylation occurs at asparagine 55. A helical membrane pass occupies residues 79-99 (IIYNLVVGLSPLLSAYGLGWL). Residues 100–108 (SDRYHRKIS) lie on the Cytoplasmic side of the membrane. The helical transmembrane segment at 109–129 (ICMSLLGFLLSRLGLLLKVLL) threads the bilayer. The Extracellular segment spans residues 130-138 (DWPVEVLYG). A helical transmembrane segment spans residues 139–159 (AAALNGLFGGFSAFWSGVMAL). At 160-172 (GSLGSSEGRRSVR) the chain is on the cytoplasmic side. A helical transmembrane segment spans residues 173-193 (LILIDLMLGLAGFCGSMASGH). Topologically, residues 194–205 (LFKQMAGHSGQG) are extracellular. The chain crosses the membrane as a helical span at residues 206–226 (LILTACSVSCASFALLYSLLV). The Cytoplasmic segment spans residues 227–282 (LKVPESVAKPSQELPAVDTVSGTVGTYRTLDPDQLDQQYAVGHPPSPGKAKPHKTT). A helical transmembrane segment spans residues 283-303 (IALLFVGAIIYDLAVVGTVDV). The Extracellular portion of the chain corresponds to 304-320 (IPLFVLREPLGWNQVQV). The chain crosses the membrane as a helical span at residues 321-341 (GYGMAAGYTIFITSFLGVLVF). Topologically, residues 342–347 (SRCFRD) are cytoplasmic. A helical membrane pass occupies residues 348–368 (TTMIMIGMVSFGSGALLLAFV). At 369 to 370 (KE) the chain is on the extracellular side. A helical transmembrane segment spans residues 371–391 (TYMFYIARAVMLFALIPVTTI). Over 392 to 406 (RSAMSKLIKGSSYGK) the chain is Cytoplasmic. Residues 407-427 (VFVILQLSLALTGVVTSTLYN) traverse the membrane as a helical segment. Residues 428-435 (KIYQLTMD) lie on the Extracellular side of the membrane. A helical membrane pass occupies residues 436–456 (MFVGSCFALSSFLSFLAIIPI). The Cytoplasmic portion of the chain corresponds to 457-475 (SIVAYKQVPLSPYGDIIEK).

Belongs to the major facilitator superfamily. SLC46A family. Post-translationally, glycosylated. In terms of tissue distribution, strongly expressed in the adult thymus. Expressed in spleen, lymph nodes, thymus, PBL, bone marrow and fetal liver. Expressed in monocytes and pre-dendridic cells.

The protein localises to the endosome membrane. It localises to the cell membrane. It carries out the reaction N-acetyl-beta-D-glucosaminyl-(1-&gt;4)-1,6-anhydro-N-acetyl-beta-D-muramoyl-L-alanyl-gamma-D-glutamyl-meso-2,6-diaminopimeloyl-D-alanine(out) + n H(+)(out) = N-acetyl-beta-D-glucosaminyl-(1-&gt;4)-1,6-anhydro-N-acetyl-beta-D-muramoyl-L-alanyl-gamma-D-glutamyl-meso-2,6-diaminopimeloyl-D-alanine(in) + n H(+)(in). The enzyme catalyses L-alanyl-gamma-D-glutamyl-meso-2,6-diaminopimelate(out) + n H(+)(out) = L-alanyl-gamma-D-glutamyl-meso-2,6-diaminopimelate(in) + n H(+)(in). The catalysed reaction is N-acetyl-D-muramoyl-L-alanyl-D-isoglutamine(out) + n H(+)(out) = N-acetyl-D-muramoyl-L-alanyl-D-isoglutamine(in) + n H(+)(in). It catalyses the reaction 2',3'-cGAMP(out) + n H(+)(out) = 2',3'-cGAMP(in) + n H(+)(in). It carries out the reaction 3',3'-cGAMP(out) + n H(+)(out) = 3',3'-cGAMP(in) + n H(+)(in). Functionally, proton-coupled transporter that delivers pathogen-associated or danger-associated molecular patterns to cytosolic pattern recognition receptors as part of the innate immune response to microbes or tissue injury. Has selectivity toward muropeptides that contain the amino acid diaminopimelic acid (DAP-type peptidoglycan muropeptides) including Tri-DAP and tracheal toxin (TCT), common in Gram-negative bacteria and Gram-positive bacilli. In the context of immune recognition of skin microbiota, shuttles bacterial muropeptides across the endolysosomal membranes into the cytosol for recognition by NOD1, triggering MYD88-dependent secretion of IL1A and neutrophil recruitment in a pyroptosis-type inflammatory process. To a lesser extent and redundantly, transports muramyl dipeptides derived from most bacterial proteoglycans, eliciting NOD2 receptor activation and downstream inflammatory responses. Postulated to function as a dominant importer of cyclic GMP-AMP dinucleotides (cGAMPs) in monocyte and macrophage cell lineages. Selectively imports cGAMPs derived from pathogenic bacteria such as 3'3'-cGAMP thus providing for differential immune recognition of pathogenic versus commensal bacteria. During tumorigenesis may transport extracellular tumor-derived 2'3'-cGAMP across the plasma membrane of M1-polarized macrophages to activate the anti-tumoral stimulator of interferon genes (STING) pathway. The transport mechanism, its electrogenicity and stoichiometry remain to be elucidated. In Homo sapiens (Human), this protein is Solute carrier family 46 member 2.